The following is a 435-amino-acid chain: Zinc finger CCCH domain-containing protein 10 (435 aa).

Residues 1–36 (MPDRDSYANGTGSSGGGPGGGGSEEASGAGTGSGGA) form a disordered region. Positions 12–35 (GSSGGGPGGGGSEEASGAGTGSGG) are enriched in gly residues. 3 consecutive C3H1-type zinc fingers follow at residues 36–63 (ATSDAICRDFLRNVCKRGKRCRYRHPDM), 73–99 (KNEFIFCHDFQNKECSRPNCRFIHGSK), and 134–161 (KEEVPICRDFLKGDCQRGAKCKFRHLQR). The interval 166–190 (DARGGGGTGGGGSTGSAPPGRRHDL) is disordered. The segment covering 168-179 (RGGGGTGGGGST) has biased composition (gly residues). 2 positions are modified to omega-N-methylarginine: R186 and R187. A coiled-coil region spans residues 235–281 (GVECRLLEEENALLRKRVEELKKQVSNLLATNEVLLEQNAQFRNQAK). Over residues 315–331 (TTLSSQALQPRPVSQQE) the composition is skewed to polar residues. The interval 315-363 (TTLSSQALQPRPVSQQELVAPTGAPAAPPTNAAPPAAPPPPPPHLNPEI) is disordered. Over residues 340 to 359 (AAPPTNAAPPAAPPPPPPHL) the composition is skewed to pro residues.

Its subcellular location is the nucleus. Its function is as follows. Specific regulator of miRNA biogenesis. Binds, via the C3H1-type zinc finger domains, to the binding motif 5'-GCAGCGC-3' on microRNA pri-MIR143 and negatively regulates the processing to mature microRNA. This is Zinc finger CCCH domain-containing protein 10 (Zc3h10) from Mus musculus (Mouse).